A 307-amino-acid chain; its full sequence is Ribosomal RNA small subunit methyltransferase H (307 aa).

Residues 32 to 34, Asp52, Phe78, Asp99, and Gln106 contribute to the S-adenosyl-L-methionine site; that span reads GGH. The segment at 287–307 is disordered; it reads KEEIESNKRSHSAKLRVAEKV.

This sequence belongs to the methyltransferase superfamily. RsmH family.

It localises to the cytoplasm. It carries out the reaction cytidine(1402) in 16S rRNA + S-adenosyl-L-methionine = N(4)-methylcytidine(1402) in 16S rRNA + S-adenosyl-L-homocysteine + H(+). Its function is as follows. Specifically methylates the N4 position of cytidine in position 1402 (C1402) of 16S rRNA. This Caldicellulosiruptor bescii (strain ATCC BAA-1888 / DSM 6725 / KCTC 15123 / Z-1320) (Anaerocellum thermophilum) protein is Ribosomal RNA small subunit methyltransferase H.